A 256-amino-acid polypeptide reads, in one-letter code: MAVGKNKRLSKGKKGLKKRVVDPFTRKEWFDIKAPTTFENRAVGKTLINKSTGLKNAADGLKGRVIEVNLADLQGSEDHAYRKVKLRVDEVQGKNLLTNFHGIDFTSDKLRSLVRKWQSLVEANVTVKTADDYYLRVFAIAFTKRQPNQVKKTTYAQSSKLREIRKKMMEIMQREVSNSTLAQLTQKLIPEVIGREIEKSTQTIFPLQNVHIRKVKLLKQPKFDLGNLMSLHGEGASEEKGKKVSSGFKDVVLESV.

Alanine 2 is subject to N-acetylalanine; partial.

The protein belongs to the eukaryotic ribosomal protein eS1 family. As to quaternary structure, component of the small ribosomal subunit. Mature ribosomes consist of a small (40S) and a large (60S) subunit. The 40S subunit contains about 33 different proteins and 1 molecule of RNA (18S). The 60S subunit contains about 49 different proteins and 3 molecules of RNA (25S, 5.8S and 5S).

It is found in the cytoplasm. In Meyerozyma guilliermondii (strain ATCC 6260 / CBS 566 / DSM 6381 / JCM 1539 / NBRC 10279 / NRRL Y-324) (Yeast), this protein is Small ribosomal subunit protein eS1.